Reading from the N-terminus, the 443-residue chain is MIQQDPGALYSDHLAVLCRRAEQALARGGFDHLVVPSGTLHYQVFDDRDYPYAVNPQFKAWLPLTRVPNSWIVFTPGKRPAVIFHQPFDYWHVVPDAPSGWWVEHFDIHIIRKPEEALALLPADPSRCAILGEPQSALGNYVPNNPAPVVNYLEWHRGSKTPYEIALMRQAQVLGVRGHRAAEAAFRNGADEFSIHMAYCQAVGQDANELPYGNIVALNEHAAVLHYTELGRKAPQPLRSFLIDAGASAHGYASDITRTYAAQGHDEFAAMIAAVDAAQQQMCAAVRPGFDYKQLHVDAHLSLMGVLKDFGVIKVSPQTALETGVSAAFFPHGIGHLIGLQVHDVAGFAASDEGGRIERPAGHPYLRLTRVLEPGMVVTIEPGLYFIDMLLNEVKDAGHGDAINWERVDFFRPYGGIRIEDEVLCTDGEADNLTRPAFAAANG.

Asp244, Asp255, His336, Glu381, and Glu420 together coordinate Mn(2+).

It belongs to the peptidase M24B family. Bacterial-type prolidase subfamily. Mn(2+) is required as a cofactor.

It carries out the reaction Xaa-L-Pro dipeptide + H2O = an L-alpha-amino acid + L-proline. In terms of biological role, splits dipeptides with a prolyl residue in the C-terminal position. This Stenotrophomonas maltophilia (strain K279a) protein is Xaa-Pro dipeptidase.